We begin with the raw amino-acid sequence, 481 residues long: Zygotic gap protein knirps (481 aa).

The nuclear receptor DNA-binding region spans 2–78 (NQTCKVCGEP…VGMSKGGSRY (77 aa)). 2 NR C4-type zinc fingers span residues 5-25 (CKVCGEPAAGFHFGAFTCEGC) and 42-66 (CKNDGKCIIDKKNRTTCKACRLRKC). Composition is skewed to low complexity over residues 100-111 (AAAGKAPGHATG), 127-148 (QQQQQQHQQQQQQQHQHQQQQQ), 245-264 (TPPTVATVPQQSQPQPAASP), 316-335 (SHSSSASPTPSKSQSSSPLS), and 420-440 (TTNSCSSSTSTSSSNSSTSST). Disordered regions lie at residues 100-161 (AAAG…GYTG), 231-294 (SVDS…PHTI), 308-336 (LLPGLTTASHSSSASPTPSKSQSSSPLSF), and 420-442 (TTNSCSSSTSTSSSNSSTSSTEA).

Belongs to the nuclear hormone receptor family. NR0 subfamily.

The protein resides in the nucleus. Its function is as follows. Transcriptional repressor. Binds to multiple sites in the eve stripe 3 enhancer element. Plays an essential role in the segmentation process both by refining the expression patterns of gap genes and by establishing pair-rules stripes of gene expression. This Drosophila virilis (Fruit fly) protein is Zygotic gap protein knirps (kni).